A 453-amino-acid polypeptide reads, in one-letter code: Cholecystokinin receptor (453 aa).

The Extracellular segment spans residues 1 to 64 (MESLRSLSNI…ILDRKKPSPS (64 aa)). 5 N-linked (GlcNAc...) asparagine glycosylation sites follow: asparagine 9, asparagine 22, asparagine 30, asparagine 35, and asparagine 39. The chain crosses the membrane as a helical span at residues 65-94 (DLNLWVRIVMYSVIFLLSVFGNTLIIIVLV). Residues 95–104 (MNKRLRTITN) are Cytoplasmic-facing. A helical transmembrane segment spans residues 105-131 (SFLLSLALSDLMVAVLCMPFTLIPNLM). Residues 132–142 (ENFIFGEVICR) are Extracellular-facing. Cysteine 141 and cysteine 223 are joined by a disulfide. The helical transmembrane segment at 143-164 (AAAYFMGLSVSVSTFNLVAISI) threads the bilayer. Topologically, residues 165–184 (ERYSAICNPLKSRVWQTRSH) are cytoplasmic. The chain crosses the membrane as a helical span at residues 185 to 205 (AYRVIAATWVLSSIIMIPYLV). The Extracellular segment spans residues 206 to 237 (YNKTVTFPMKDRRVGHQCRLVWPSKQVQQAWY). Residues 238–261 (VLLLTILFFIPGVVMIVAYGLISR) traverse the membrane as a helical segment. Over 262–343 (ELYRGIQFEM…KLMAKKRVIR (82 aa)) the chain is Cytoplasmic. Residues 344–364 (MLIVIVAMFFICWMPIFVANT) traverse the membrane as a helical segment. At 365-379 (WKAFDELSAFNTLTG) the chain is on the extracellular side. Residues 380 to 403 (APISFIHLLSYTSACVNPLIYCFM) form a helical membrane-spanning segment. Residue cysteine 401 is the site of S-palmitoyl cysteine attachment. The Cytoplasmic portion of the chain corresponds to 404–453 (NKRFRKAFLGTFSSCIKPCRNFRDTDEDIAATGASLSKFSYTTVSSLGPA).

It belongs to the G-protein coupled receptor 1 family. In terms of tissue distribution, brain and stomach.

The protein resides in the cell membrane. Receptor for cholecystokinin. This receptor mediates its action by association with G proteins that activate a phosphatidylinositol-calcium second messenger system. Has high affinity for CCK-8 and low affinities for gastrin-17-I, CCK-4, and unsulfated CCK-8. This Xenopus laevis (African clawed frog) protein is Cholecystokinin receptor (cckar).